Here is a 285-residue protein sequence, read N- to C-terminus: SLAM family member 9 (285 aa).

The N-terminal stretch at M1–G17 is a signal peptide. Topologically, residues F18 to L232 are extracellular. Residues P25–R126 form the Ig-like V-type domain. N-linked (GlcNAc...) asparagine glycans are attached at residues N37, N97, N141, N149, N175, and N206. Residues P134–S213 enclose the Ig-like C2-type domain. A disulfide bond links C154 and C198. A helical transmembrane segment spans residues L233–F253. Residues R254–V285 are Cytoplasmic-facing.

Its subcellular location is the membrane. May play a role in the immune response. This Mus musculus (Mouse) protein is SLAM family member 9 (Slamf9).